The sequence spans 228 residues: Extracellular protease inhibitor 10 (228 aa).

The N-terminal stretch at 1 to 22 (MKSAFTLSLALVAVTATISAAA) is a signal peptide. Kazal-like domains follow at residues 23–72 (DDNC…ECAS), 90–127 (TSGT…AKCK), and 156–208 (GYQG…EGTL). N-linked (GlcNAc...) asparagine glycosylation occurs at Asn25. 3 disulfide bridges follow: Cys26–Cys56, Cys30–Cys49, and Cys38–Cys70. Residues 69–92 (ECASTPASSATPSPVTSSTGSTSG) form a disordered region. Low complexity predominate over residues 71 to 92 (ASTPASSATPSPVTSSTGSTSG). Cystine bridges form between Cys96–Cys126, Cys100–Cys119, Cys162–Cys193, and Cys167–Cys186. An N-linked (GlcNAc...) asparagine glycan is attached at Asn199.

In terms of assembly, interacts with host subtilisin-like protease P69B.

Its subcellular location is the secreted. Secreted effector that interacts with and inhibits the pathogenesis-related P69B subtilisin-like serine protease of host tomato. Inhibition of host proteases by a pathogen extracellular protease inhibitor forms a specific type of defense-counterdefense mechanism between plants and microbial pathogens. In Phytophthora infestans (strain T30-4) (Potato late blight agent), this protein is Extracellular protease inhibitor 10.